Here is a 398-residue protein sequence, read N- to C-terminus: Nuclear egress protein 2 (398 aa).

The Perinuclear space portion of the chain corresponds to 1-359 (MEMNKVLHQD…GPSRPQSGPW (359 aa)). Disordered regions lie at residues 202-246 (ALTR…PPPP) and 306-334 (LEEH…SLER). Positions 215-224 (ASPPPPPPRH) are enriched in pro residues. Ser-216 is modified (phosphoserine). The span at 225 to 240 (PSCSPTMVAAGGAAAG) shows a compositional bias: low complexity. Basic residues predominate over residues 311 to 323 (SRRRGVSTHHRHP). Residues 360-382 (LPARFATLGPLVLALLLVLALLW) traverse the membrane as a helical segment. The Nuclear portion of the chain corresponds to 383–398 (RGHGQSSSPTRSAHRD).

The protein belongs to the herpesviridae NEC2 protein family. In terms of assembly, forms a heterohexameric complex with NEC1. Interacts with host UBA7 and RNF170; this interaction promotes UBA7 proteasomal degradation. Phosphorylated. Phosphorylation by viral kinase UL97 at Ser-216 plays an important role for correct viral nuclear egress complex (NEC) localization.

The protein resides in the host nucleus inner membrane. In terms of biological role, plays an essential role in virion nuclear egress, the first step of virion release from infected cell. Within the host nucleus, NEC1 interacts with the newly formed capsid through the vertexes and directs it to the inner nuclear membrane by associating with NEC2. Induces the budding of the capsid at the inner nuclear membrane as well as its envelopment into the perinuclear space. There, the NEC1/NEC2 complex promotes the fusion of the enveloped capsid with the outer nuclear membrane and the subsequent release of the viral capsid into the cytoplasm where it will reach the secondary budding sites in the host Golgi or trans-Golgi network. Inhibits host ISGylation and subsequent innate antiviral response by targeting host UBA7 for proteasomal degradation. In Homo sapiens (Human), this protein is Nuclear egress protein 2.